We begin with the raw amino-acid sequence, 777 residues long: Double zinc ribbon and ankyrin repeat-containing protein 1 (777 aa).

The segment covering 161 to 176 has biased composition (basic and acidic residues); the sequence is QVGERTDPKTLKDLRF. Residues 161-202 form a disordered region; that stretch reads QVGERTDPKTLKDLRFSESPLEIPAHSGGSGSRPPTRQSQSP. Positions 193-202 are enriched in polar residues; sequence RPPTRQSQSP. S201 carries the phosphoserine modification. 2 consecutive DZANK-type zinc fingers follow at residues 230 to 289 and 358 to 406; these read CAHC…CVVC and CSRC…GSCG. ANK repeat units follow at residues 442–473 and 477–506; these read NIPL…LLAK and EIAS…GYWR.

In terms of assembly, interacts with NINL. Associates with DYNC1H1 and multiple dynein intermediate and light chains as well as actin-binding proteins.

The protein localises to the cytoplasm. The protein resides in the cytoskeleton. It is found in the microtubule organizing center. It localises to the centrosome. Its subcellular location is the cilium basal body. In terms of biological role, involved in vesicle transport in photoreceptor cells. In Macaca fascicularis (Crab-eating macaque), this protein is Double zinc ribbon and ankyrin repeat-containing protein 1 (DZANK1).